The chain runs to 225 residues: Transcriptional regulatory protein CssR (225 aa).

The 114-residue stretch at Thr-4–Leu-117 folds into the Response regulatory domain. Asp-52 carries the post-translational modification 4-aspartylphosphate. Positions Lys-129–Ser-224 form a DNA-binding region, ompR/PhoB-type.

Post-translationally, phosphorylated by CssS.

Its subcellular location is the cytoplasm. Its function is as follows. Member of the two-component regulatory system CssS/CssR required to control the cellular response to secretion stress. The sequence is that of Transcriptional regulatory protein CssR (cssR) from Bacillus subtilis (strain 168).